The chain runs to 580 residues: Guanine nucleotide-binding protein alpha-4 subunit (580 aa).

A compositionally biased stretch (polar residues) spans 1–10 (MSPSVSSPQL). A disordered region spans residues 1 to 28 (MSPSVSSPQLRHTKSNRAISRIDRTDPL). The region spanning 93–579 (RVYKMVLLGQ…RENLKLTGLV (487 aa)) is the G-alpha domain. The interval 96-109 (KMVLLGQAGAGKTT) is G1 motif. 101–108 (GQAGAGKT) lines the GTP pocket. Disordered regions lie at residues 160-196 (KSSE…PNDA) and 302-325 (GRAA…KDNS). Positions 167-183 (LESSTSASTSTSASASS) are enriched in low complexity. Positions 387–395 (DILHSRVRT) are G2 motif. Residues 389–395 (LHSRVRT), 415–419 (DVGGS), 484–487 (NKID), and Ala551 contribute to the GTP site. Residue Thr395 coordinates Mg(2+). Positions 411–420 (YRIYDVGGSR) are G3 motif. Positions 480–487 (ILFLNKID) are G4 motif. The interval 549–554 (TVATST) is G5 motif.

Belongs to the G-alpha family. As to quaternary structure, g proteins are composed of 3 units; alpha, beta and gamma. The alpha chain contains the guanine nucleotide binding site.

Guanine nucleotide-binding proteins (G proteins) are involved as modulators or transducers in various transmembrane signaling systems. The polypeptide is Guanine nucleotide-binding protein alpha-4 subunit (GPA4) (Mycosarcoma maydis (Corn smut fungus)).